The chain runs to 333 residues: Ketol-acid reductoisomerase (NADP(+)) (333 aa).

The KARI N-terminal Rossmann domain occupies 1-171 (MSNHTQPKIA…GGARANIIKT (171 aa)). NADP(+)-binding positions include 14–17 (YGSQ), Arg-37, Thr-42, and 72–75 (DMVQ). His-97 is a catalytic residue. NADP(+) is bound at residue Gly-123. In terms of domain architecture, KARI C-terminal knotted spans 172 to 317 (TFKEETETDL…KKLRAKMVWL (146 aa)). Residues Asp-180, Glu-184, Glu-216, and Glu-220 each contribute to the Mg(2+) site. Ser-241 is a binding site for substrate.

This sequence belongs to the ketol-acid reductoisomerase family. Requires Mg(2+) as cofactor.

The catalysed reaction is (2R)-2,3-dihydroxy-3-methylbutanoate + NADP(+) = (2S)-2-acetolactate + NADPH + H(+). The enzyme catalyses (2R,3R)-2,3-dihydroxy-3-methylpentanoate + NADP(+) = (S)-2-ethyl-2-hydroxy-3-oxobutanoate + NADPH + H(+). It participates in amino-acid biosynthesis; L-isoleucine biosynthesis; L-isoleucine from 2-oxobutanoate: step 2/4. It functions in the pathway amino-acid biosynthesis; L-valine biosynthesis; L-valine from pyruvate: step 2/4. Involved in the biosynthesis of branched-chain amino acids (BCAA). Catalyzes an alkyl-migration followed by a ketol-acid reduction of (S)-2-acetolactate (S2AL) to yield (R)-2,3-dihydroxy-isovalerate. In the isomerase reaction, S2AL is rearranged via a Mg-dependent methyl migration to produce 3-hydroxy-3-methyl-2-ketobutyrate (HMKB). In the reductase reaction, this 2-ketoacid undergoes a metal-dependent reduction by NADPH to yield (R)-2,3-dihydroxy-isovalerate. The protein is Ketol-acid reductoisomerase (NADP(+)) of Xanthomonas axonopodis pv. citri (strain 306).